The sequence spans 620 residues: Probable translation initiation factor IF-2 (620 aa).

The segment covering 1–10 (MSDTDADADT) has biased composition (acidic residues). Residues 1 to 29 (MSDTDADADTDAVSTTETSMNADANANAD) form a disordered region. The span at 11 to 29 (DAVSTTETSMNADANANAD) shows a compositional bias: low complexity. Positions 33 to 248 (LRTPIVAVLG…VLMGLSQRYM (216 aa)) constitute a tr-type G domain. The tract at residues 42-49 (GHVDHGKT) is G1. 42–49 (GHVDHGKT) contacts GTP. The tract at residues 67–71 (AITQH) is G2. The interval 104-107 (DTPG) is G3. Residues 104–108 (DTPGH) and 158–161 (NKVD) each bind GTP. The tract at residues 158-161 (NKVD) is G4. The segment covering 162–183 (TTPGWTPTDGSPIQPTYESQPS) has biased composition (polar residues). Residues 162 to 185 (TTPGWTPTDGSPIQPTYESQPSAA) are disordered. Residues 226 to 228 (SAI) are G5.

Belongs to the TRAFAC class translation factor GTPase superfamily. Classic translation factor GTPase family. IF-2 subfamily.

In terms of biological role, function in general translation initiation by promoting the binding of the formylmethionine-tRNA to ribosomes. Seems to function along with eIF-2. This chain is Probable translation initiation factor IF-2, found in Haloquadratum walsbyi (strain DSM 16790 / HBSQ001).